The chain runs to 227 residues: MHKNGKFIPLLALGFTFFLSGCDYFADKHLVEEMKEQQKEQETKINLLEKQQKEQEAKINLLEKQQATIINTTKKVTEVVGRVERKQRLFDYTELDPSQTHYFIINNGNIGLAGRILSIEPIDNGSVIHLDLVNLLSIPVSNLAFNMTWGTKKPSEAKDLPRWKQLLLNTKMDSTIELLPGAWTNVTLTLKGVSPNNLKYLKIGIDMENVIFDSIQPINDTKKKPKK.

An N-terminal signal peptide occupies residues 1–21; sequence MHKNGKFIPLLALGFTFFLSG. Residue Cys-22 is the site of N-palmitoyl cysteine attachment. The S-diacylglycerol cysteine moiety is linked to residue Cys-22. The stretch at 31–68 forms a coiled coil; that stretch reads VEEMKEQQKEQETKINLLEKQQKEQEAKINLLEKQQAT.

In terms of assembly, homotrimer.

The protein resides in the cell inner membrane. Its function is as follows. Required for proper surface expression of the autotransporter adhesin SadA. Could be directly involved in the biogenesis of functionally active SadA. This Salmonella typhimurium (strain LT2 / SGSC1412 / ATCC 700720) protein is Inner membrane lipoprotein SadB.